The following is a 130-amino-acid chain: Small ribosomal subunit protein uS9 (130 aa).

The disordered stretch occupies residues 109 to 130 (RAKERKKYGLYGARRSPQFTKR).

It belongs to the universal ribosomal protein uS9 family.

The chain is Small ribosomal subunit protein uS9 from Malacoplasma penetrans (strain HF-2) (Mycoplasma penetrans).